The following is a 514-amino-acid chain: L-threonine dehydratase biosynthetic IlvA (514 aa).

Residue Lys-62 is modified to N6-(pyridoxal phosphate)lysine. Pyridoxal 5'-phosphate contacts are provided by residues Asn-89, Gly-188–Leu-192, and Ser-315. ACT-like domains are found at residues Ala-339 to Asp-411 and Arg-434 to Asn-504.

It belongs to the serine/threonine dehydratase family. As to quaternary structure, homotetramer. Pyridoxal 5'-phosphate is required as a cofactor.

The enzyme catalyses L-threonine = 2-oxobutanoate + NH4(+). Its pathway is amino-acid biosynthesis; L-isoleucine biosynthesis; 2-oxobutanoate from L-threonine: step 1/1. Its activity is regulated as follows. Isoleucine allosterically inhibits whereas valine allosterically activates this enzyme. Its function is as follows. Catalyzes the anaerobic formation of alpha-ketobutyrate and ammonia from threonine in a two-step reaction. The first step involved a dehydration of threonine and a production of enamine intermediates (aminocrotonate), which tautomerizes to its imine form (iminobutyrate). Both intermediates are unstable and short-lived. The second step is the nonenzymatic hydrolysis of the enamine/imine intermediates to form 2-ketobutyrate and free ammonia. In the low water environment of the cell, the second step is accelerated by RidA. In Escherichia coli (strain K12), this protein is L-threonine dehydratase biosynthetic IlvA (ilvA).